A 433-amino-acid chain; its full sequence is MSKKLFIQTLGCAMNVRDSEHIIAELSQKEDYSLTQNIEEADLILINTCSVREKPVHKLFSEVGAFEKAKKRGAKIGVCGCTASHLGSEIFKRAPYVDFVLGARNVSKITKAVNTPKFISTDINHDESEYAFGEFRGSPYKSHINISIGCDKKCTYCIVPHTRGDEISIPSSLILKEVEKAAKSGAKEIFLLGQNVNNYGKRFSGVQENIDFSDLLVKISEIEGVERIRFTSPHPLHMDDKFLEIFTNNPKICKSMHMPLQSGNTKVLREMKRGYTKEWFLDRALRLRKMCPDVSISTDIIVAFPGESDNEFEDTMDVLEQVRFEQIFSFKYSPRPLTKAATFINQIDDKTASERLTRLQNRHSEILDEIVAAQKDKIFDVYFEELRANGGVAGRSFNNFLVQVDGSEELLGTTQKAKITNPKRMVLYGELQI.

One can recognise an MTTase N-terminal domain in the interval 3 to 118; that stretch reads KKLFIQTLGC…ITKAVNTPKF (116 aa). Cysteine 12, cysteine 49, cysteine 81, cysteine 150, cysteine 154, and cysteine 157 together coordinate [4Fe-4S] cluster. In terms of domain architecture, Radical SAM core spans 136 to 369; sequence RGSPYKSHIN…QNRHSEILDE (234 aa). The region spanning 372–433 is the TRAM domain; it reads AAQKDKIFDV…RMVLYGELQI (62 aa).

Belongs to the methylthiotransferase family. MiaB subfamily. As to quaternary structure, monomer. It depends on [4Fe-4S] cluster as a cofactor.

The protein resides in the cytoplasm. The catalysed reaction is N(6)-dimethylallyladenosine(37) in tRNA + (sulfur carrier)-SH + AH2 + 2 S-adenosyl-L-methionine = 2-methylsulfanyl-N(6)-dimethylallyladenosine(37) in tRNA + (sulfur carrier)-H + 5'-deoxyadenosine + L-methionine + A + S-adenosyl-L-homocysteine + 2 H(+). In terms of biological role, catalyzes the methylthiolation of N6-(dimethylallyl)adenosine (i(6)A), leading to the formation of 2-methylthio-N6-(dimethylallyl)adenosine (ms(2)i(6)A) at position 37 in tRNAs that read codons beginning with uridine. This chain is tRNA-2-methylthio-N(6)-dimethylallyladenosine synthase, found in Campylobacter concisus (strain 13826).